We begin with the raw amino-acid sequence, 150 residues long: 3-dehydroquinate dehydratase (150 aa).

The active-site Proton acceptor is Tyr23. Residues Asn79, His85, and Asp92 each contribute to the substrate site. The Proton donor role is filled by His105. Substrate is bound by residues 106 to 107 (IS) and Arg116.

This sequence belongs to the type-II 3-dehydroquinase family. Homododecamer.

The enzyme catalyses 3-dehydroquinate = 3-dehydroshikimate + H2O. Its pathway is metabolic intermediate biosynthesis; chorismate biosynthesis; chorismate from D-erythrose 4-phosphate and phosphoenolpyruvate: step 3/7. Its function is as follows. Catalyzes a trans-dehydration via an enolate intermediate. The sequence is that of 3-dehydroquinate dehydratase from Marinomonas sp. (strain MWYL1).